A 361-amino-acid polypeptide reads, in one-letter code: Chorismate synthase (361 aa).

Arginine 48 and arginine 54 together coordinate NADP(+). FMN contacts are provided by residues 125–127 (RSS), 238–239 (NA), glycine 278, 293–297 (KPTSS), and arginine 319.

It belongs to the chorismate synthase family. As to quaternary structure, homotetramer. Requires FMNH2 as cofactor.

The enzyme catalyses 5-O-(1-carboxyvinyl)-3-phosphoshikimate = chorismate + phosphate. The protein operates within metabolic intermediate biosynthesis; chorismate biosynthesis; chorismate from D-erythrose 4-phosphate and phosphoenolpyruvate: step 7/7. Functionally, catalyzes the anti-1,4-elimination of the C-3 phosphate and the C-6 proR hydrogen from 5-enolpyruvylshikimate-3-phosphate (EPSP) to yield chorismate, which is the branch point compound that serves as the starting substrate for the three terminal pathways of aromatic amino acid biosynthesis. This reaction introduces a second double bond into the aromatic ring system. This is Chorismate synthase from Pectobacterium carotovorum subsp. carotovorum (strain PC1).